Consider the following 251-residue polypeptide: Cholesterol 25-hydroxylase-like protein (251 aa).

Transmembrane regions (helical) follow at residues 22-42 (FFPVLFSITVYLSFCLPFVLL), 69-89 (WSCLALSLYNHVVYIFPLSVL), and 108-128 (VVWDLAACLLLFDFQYFVWHL). Residues 113-247 (AACLLLFDFQ…FTHWDKLFGT (135 aa)) enclose the Fatty acid hydroxylase domain. The Histidine box-1 motif lies at 126–130 (WHLLH). Positions 141 to 145 (HKVHH) match the Histidine box-2 motif. The Histidine box-3 motif lies at 222–228 (HHDVHHQ).

It belongs to the sterol desaturase family. It depends on Fe cation as a cofactor.

The protein localises to the endoplasmic reticulum membrane. It catalyses the reaction cholesterol + AH2 + O2 = 25-hydroxycholesterol + A + H2O. It carries out the reaction cholesterol + NADPH + O2 + H(+) = 25-hydroxycholesterol + NADP(+) + H2O. Its function is as follows. Catalyzes the formation of 25-hydroxycholesterol from cholesterol, leading to repress cholesterol biosynthetic enzymes. Plays a key role in cell positioning and movement in lymphoid tissues: 25-hydroxycholesterol is an intermediate in biosynthesis of 7-alpha,25-dihydroxycholesterol (7-alpha,25-OHC), an oxysterol that acts as a ligand for the G protein-coupled receptor GPR183/EBI2, a chemotactic receptor for a number of lymphoid cells. May play an important role in regulating lipid metabolism by synthesizing a corepressor that blocks sterol regulatory element binding protein (SREBP) processing. In testis, production of 25-hydroxycholesterol by macrophages may play a role in Leydig cell differentiation. This is Cholesterol 25-hydroxylase-like protein (ch25h) from Danio rerio (Zebrafish).